Reading from the N-terminus, the 358-residue chain is Aminomethyltransferase (358 aa).

The protein belongs to the GcvT family. The glycine cleavage system is composed of four proteins: P, T, L and H.

It catalyses the reaction N(6)-[(R)-S(8)-aminomethyldihydrolipoyl]-L-lysyl-[protein] + (6S)-5,6,7,8-tetrahydrofolate = N(6)-[(R)-dihydrolipoyl]-L-lysyl-[protein] + (6R)-5,10-methylene-5,6,7,8-tetrahydrofolate + NH4(+). Its function is as follows. The glycine cleavage system catalyzes the degradation of glycine. The polypeptide is Aminomethyltransferase (Francisella tularensis subsp. holarctica (strain FTNF002-00 / FTA)).